Reading from the N-terminus, the 251-residue chain is MEDDAWLDLVGISADPPNRRNKCEKCKRPVVVCWCPALPHPPEAVSSQIVILQHPAEEKRSLRTALMLQLGLEPGKCVVYKGKRFPNHRNHADLQRILDSPQTLLLYPSRDSVPLEEVDHSAGPYTLVLIDGTWPQAKAIYASSPALHRLRQVKLIAVGISDYIIRTQPTEGCLSTLETAAQCLAVLESRPELRQTLVRPLHTLCKYQLDNGAVEHQSKEFLLKNNQYPKPIGKRLSRLLRNTACDGNEET.

Zn(2+) contacts are provided by Cys-23, Cys-26, Cys-33, and Cys-35. The DXTW motif lies at 131 to 134; that stretch reads DGTW.

Belongs to the TDD superfamily. DTWD2 family.

The enzyme catalyses a uridine in tRNA + S-adenosyl-L-methionine = a 3-[(3S)-3-amino-3-carboxypropyl]uridine in tRNA + S-methyl-5'-thioadenosine + H(+). Catalyzes the formation of 3-(3-amino-3-carboxypropyl)uridine (acp3U) at position 20a in the D-loop of several cytoplasmic tRNAs (acp3U(20a)). The polypeptide is tRNA-uridine aminocarboxypropyltransferase 2 (Drosophila melanogaster (Fruit fly)).